The primary structure comprises 1045 residues: 3-hydroxy-3-methylglutaryl-coenzyme A reductase 2 (1045 aa).

Topologically, residues 1–24 (MSLPLKTIVHLVKPFACTARFSAR) are cytoplasmic. The chain crosses the membrane as a helical span at residues 25–45 (YPIHVIVVAVLLSAAAYLSVT). Residues 46 to 186 (QSYLNEWKLD…FSNKTSEFDQ (141 aa)) lie on the Lumenal side of the membrane. N-linked (GlcNAc...) asparagine glycosylation is found at N115, N150, N158, and N179. A helical membrane pass occupies residues 187–207 (FDLFIILAAYLTLFYTLCCLF). The 169-residue stretch at 188–356 (DLFIILAAYL…ATFYSAILSM (169 aa)) folds into the SSD domain. The Cytoplasmic segment spans residues 208–216 (NDMRKIGSK). Residues 217–237 (FWLSFSALSNSACALYLSLYT) form a helical membrane-spanning segment. Over 238–243 (THSLLK) the chain is Lumenal. A helical membrane pass occupies residues 244–264 (KPASLLSLVIGLPFIVVIIGF). Residues 265–301 (KHKVRLAAFSLQKFHRISIDKKITVSNIIYEAMFQEG) are Cytoplasmic-facing. Residues 302–322 (AYLIRDYLFYISSFIGCAIYA) form a helical membrane-spanning segment. The Lumenal segment spans residues 323 to 324 (RH). The helical transmembrane segment at 325-345 (LPGLVNFCILSTFMLVFDLLL) threads the bilayer. At 346–402 (SATFYSAILSMKLEINIIHRSTVIRQTLEEDGVVPTTADIIYKDETASEPHFLRSNV) the chain is on the cytoplasmic side. Residues 403–423 (AIILGKASVIGLLLLINLYVF) form a helical membrane-spanning segment. Topologically, residues 424-497 (TDKLNATILN…DSVSNAIRDQ (74 aa)) are lumenal. N-linked (GlcNAc...) asparagine glycans are attached at residues N428 and N455. Residues 498 to 518 (FISKLLFFAFAVSISINVYLL) traverse the membrane as a helical segment. Residues 519-1045 (NAAKIHTGYM…GPPCKTSALL (527 aa)) are Cytoplasmic-facing. Phosphothreonine is present on T565. The Charge relay system role is filled by E710. Residue 716-722 (SAMRGCK) coordinates CoA. NADP(+) is bound by residues 777 to 779 (SRF) and 804 to 812 (DAMGMNMIS). K844 (charge relay system) is an active-site residue. 873–875 (VLK) is a CoA binding site. D920 functions as the Charge relay system in the catalytic mechanism. Residue 1015-1016 (SH) participates in CoA binding. Residue H1016 is the Proton donor of the active site. Residues 1018 to 1045 (THNRKTNKANELPQPSNKGPPCKTSALL) are disordered. 1020 to 1021 (NR) serves as a coordination point for NADP(+).

It belongs to the HMG-CoA reductase family.

Its subcellular location is the endoplasmic reticulum membrane. It is found in the nucleus envelope. It carries out the reaction (R)-mevalonate + 2 NADP(+) + CoA = (3S)-3-hydroxy-3-methylglutaryl-CoA + 2 NADPH + 2 H(+). The protein operates within metabolic intermediate biosynthesis; (R)-mevalonate biosynthesis; (R)-mevalonate from acetyl-CoA: step 3/3. Functionally, HMG-CoA reductase; part of the first module of ergosterol biosynthesis pathway constitutes by the early steps of the pathway, conserved across all eukaryotes, and which results in the formation of mevalonate from acetyl-coenzyme A (acetyl-CoA). HMG1 and HMG2 catalyze the reduction of hydroxymethylglutaryl-CoA (HMG-CoA) to mevalonate that is the rate-limiting step within the first mosule. The first module starts with the action of the cytosolic acetyl-CoA acetyltransferase ERG10 that catalyzes the formation of acetoacetyl-CoA. The hydroxymethylglutaryl-CoA synthase ERG13 then condenses acetyl-CoA with acetoacetyl-CoA to form HMG-CoA. The rate-limiting step of the early module is the reduction to mevalonate by the 3-hydroxy-3-methylglutaryl-coenzyme A (HMG-CoA) reductases HMG1 and HMG2 which are derived from a single ancestral HMGR gene by gene duplication. The polypeptide is 3-hydroxy-3-methylglutaryl-coenzyme A reductase 2 (Saccharomyces cerevisiae (strain ATCC 204508 / S288c) (Baker's yeast)).